A 304-amino-acid polypeptide reads, in one-letter code: Non-specific ribonucleoside hydrolase RihC (304 aa).

Residue histidine 233 is part of the active site.

This sequence belongs to the IUNH family. RihC subfamily.

Its function is as follows. Hydrolyzes both purine and pyrimidine ribonucleosides with a broad-substrate specificity. This is Non-specific ribonucleoside hydrolase RihC from Escherichia coli O45:K1 (strain S88 / ExPEC).